A 211-amino-acid polypeptide reads, in one-letter code: Urease accessory protein UreG (211 aa).

11–18 (GPVGSGKT) serves as a coordination point for GTP.

Belongs to the SIMIBI class G3E GTPase family. UreG subfamily. In terms of assembly, homodimer. UreD, UreF and UreG form a complex that acts as a GTP-hydrolysis-dependent molecular chaperone, activating the urease apoprotein by helping to assemble the nickel containing metallocenter of UreC. The UreE protein probably delivers the nickel.

The protein resides in the cytoplasm. Its function is as follows. Facilitates the functional incorporation of the urease nickel metallocenter. This process requires GTP hydrolysis, probably effectuated by UreG. The protein is Urease accessory protein UreG of Photorhabdus laumondii subsp. laumondii (strain DSM 15139 / CIP 105565 / TT01) (Photorhabdus luminescens subsp. laumondii).